Reading from the N-terminus, the 306-residue chain is tRNA pseudouridine synthase B (306 aa).

The active-site Nucleophile is the Asp43.

Belongs to the pseudouridine synthase TruB family. Type 1 subfamily.

It catalyses the reaction uridine(55) in tRNA = pseudouridine(55) in tRNA. Functionally, responsible for synthesis of pseudouridine from uracil-55 in the psi GC loop of transfer RNAs. In Lacticaseibacillus casei (strain BL23) (Lactobacillus casei), this protein is tRNA pseudouridine synthase B.